We begin with the raw amino-acid sequence, 349 residues long: Ion-translocating oxidoreductase complex subunit D (349 aa).

The next 4 helical transmembrane spans lie at 20-40 (IMFLVVLSCIPGLCTEIYFFG), 42-62 (GVLIQTLLFVIISLLFEIIIL), 83-105 (VLLGLSTPCALPWWMIIFSCFFA), and 120-140 (IFNPAMIGYVVLLISFPVHMT). Threonine 184 is modified (FMN phosphoryl threonine). Helical transmembrane passes span 212-232 (IVSIAWKYINISFLIGGCFLL), 236-256 (VICWRIPLSFLSSLIFFSSIT), 263-283 (FFCSPLFHLFSGGTMMCAFFI), 291-311 (SCTKIGKIFFGLIIGFLVWII), and 319-339 (DGIAFSVLFANMIVPLMDAYL).

Belongs to the NqrB/RnfD family. As to quaternary structure, the complex is composed of six subunits: RnfA, RnfB, RnfC, RnfD, RnfE and RnfG. The cofactor is FMN.

The protein resides in the cell inner membrane. Part of a membrane-bound complex that couples electron transfer with translocation of ions across the membrane. The sequence is that of Ion-translocating oxidoreductase complex subunit D from Buchnera aphidicola subsp. Schizaphis graminum (strain Sg).